The sequence spans 377 residues: All-trans-retinol dehydrogenase [NAD(+)] ADH4 (377 aa).

Position 47 (C47) interacts with Zn(2+). T49 serves as a coordination point for NAD(+). Residues H68, C98, C101, C104, C112, and C179 each coordinate Zn(2+). NAD(+) is bound by residues 204-209, D228, K233, 297-299, 320-322, and R372; these read GLGCVG, VGA, and TFF.

The protein belongs to the zinc-containing alcohol dehydrogenase family. Class-II subfamily. Dimer. It depends on Zn(2+) as a cofactor. As to expression, liver specific.

The protein resides in the cytoplasm. The catalysed reaction is all-trans-retinol + NAD(+) = all-trans-retinal + NADH + H(+). It carries out the reaction 9-cis-retinol + NAD(+) = 9-cis-retinal + NADH + H(+). It catalyses the reaction 20-hydroxy-(5Z,8Z,11Z,14Z)-eicosatetraenoate + NAD(+) = 20-oxo-(5Z,8Z,11Z,14Z)-eicosatetraenoate + NADH + H(+). The enzyme catalyses 20-oxo-(5Z,8Z,11Z,14Z)-eicosatetraenoate + NAD(+) + H2O = (5Z,8Z,11Z,14Z)-eicosatetraenedioate + NADH + 2 H(+). The catalysed reaction is 1,4-benzoquinone + NADH + H(+) = hydroquinone + NAD(+). Its activity is regulated as follows. Oxidation of 20-HETE is inhibited by low concentrations of N-heptylformamide. Oxidation of 20-HETE is a decreased by 55-65% by either all-trans-retinol or all-trans-retinoic acid. Strongly inhibited by omega-hydroxy fatty acids. Its function is as follows. Catalyzes the NAD-dependent oxidation of either all-trans-retinol or 9-cis-retinol. Also oxidizes long chain omega-hydroxy fatty acids, such as 20-HETE, producing both the intermediate aldehyde, 20-oxoarachidonate and the end product, a dicarboxylic acid, (5Z,8Z,11Z,14Z)-eicosatetraenedioate. Also catalyzes the reduction of benzoquinones. This is All-trans-retinol dehydrogenase [NAD(+)] ADH4 from Mus musculus (Mouse).